We begin with the raw amino-acid sequence, 175 residues long: Large ribosomal subunit protein uL10 (175 aa).

The protein belongs to the universal ribosomal protein uL10 family. Part of the ribosomal stalk of the 50S ribosomal subunit. The N-terminus interacts with L11 and the large rRNA to form the base of the stalk. The C-terminus forms an elongated spine to which L12 dimers bind in a sequential fashion forming a multimeric L10(L12)X complex.

Forms part of the ribosomal stalk, playing a central role in the interaction of the ribosome with GTP-bound translation factors. This chain is Large ribosomal subunit protein uL10, found in Picosynechococcus sp. (strain ATCC 27264 / PCC 7002 / PR-6) (Agmenellum quadruplicatum).